The chain runs to 400 residues: CCA-adding enzyme (400 aa).

ATP-binding residues include Gly-28 and Arg-31. Positions 28 and 31 each coordinate CTP. The Mg(2+) site is built by Asp-41 and Asp-43. Arg-112, Asp-155, Arg-158, Arg-161, and Arg-164 together coordinate ATP. Arg-112, Asp-155, Arg-158, Arg-161, and Arg-164 together coordinate CTP.

Belongs to the tRNA nucleotidyltransferase/poly(A) polymerase family. Bacterial CCA-adding enzyme type 3 subfamily. As to quaternary structure, homodimer. Requires Mg(2+) as cofactor.

It catalyses the reaction a tRNA precursor + 2 CTP + ATP = a tRNA with a 3' CCA end + 3 diphosphate. It carries out the reaction a tRNA with a 3' CCA end + 2 CTP + ATP = a tRNA with a 3' CCACCA end + 3 diphosphate. Its function is as follows. Catalyzes the addition and repair of the essential 3'-terminal CCA sequence in tRNAs without using a nucleic acid template. Adds these three nucleotides in the order of C, C, and A to the tRNA nucleotide-73, using CTP and ATP as substrates and producing inorganic pyrophosphate. tRNA 3'-terminal CCA addition is required both for tRNA processing and repair. Also involved in tRNA surveillance by mediating tandem CCA addition to generate a CCACCA at the 3' terminus of unstable tRNAs. While stable tRNAs receive only 3'-terminal CCA, unstable tRNAs are marked with CCACCA and rapidly degraded. In Staphylococcus epidermidis (strain ATCC 12228 / FDA PCI 1200), this protein is CCA-adding enzyme.